The following is a 528-amino-acid chain: Calcium-dependent protein kinase 4 (528 aa).

Positions 1 to 36 (MGQEVSSVNNTKNEHHKTNKKSLKGGNERHEMKESS) are disordered. A lipid anchor (N-myristoyl glycine) is attached at G2. The span at 14 to 23 (EHHKTNKKSL) shows a compositional bias: basic residues. One can recognise a Protein kinase domain in the interval 71–329 (KGIKILGKGS…RDALEHEWIK (259 aa)). Residues 76–84 (LGKGSFGEV) and K99 each bind ATP. The active-site Proton acceptor is the D193. Positions 350-358 (NIRQFQSTQ) match the J domain autoinhibitory motif motif. Residues 350–386 (NIRQFQSTQKLAQAALLYMGSKLTTIDETKELTKIFK) form a j domain region. Residues 359 to 368 (KLAQAALLYM) carry the J domain EF-hand interaction motif motif. 4 EF-hand domains span residues 376–411 (DETKELTKIFKKMDKNGDGQLDRNELIIGYKELLKL), 427–458 (EVDQILNSIDLDQNGYIEYSEFLTVSIDRKLL), 459–494 (LSTERLEKAFKLFDKDGSGKISANELAQLFGLSDVS), and 496–528 (ECWKTVLKEVDQNNDGEIDFKEFRDMLVKLCNY). Residues D389, N391, D393, Q395, E400, D436, D438, N440, Y442, E447, D472, D474, S476, K478, E483, D506, N508, D510, E512, and E517 each coordinate Ca(2+).

The protein belongs to the protein kinase superfamily. Ser/Thr protein kinase family. CDPK subfamily. In terms of assembly, may interact with the pre-replication MCM complex prior male gametogenesis activation. It depends on Mg(2+) as a cofactor. Post-translationally, myristoylated; myristoylation may target it to different subcellular compartments. During male gametogenesis, myristoylation is required to initiate DNA replication but not for mitotic spindle assembly or axoneme activation. In terms of processing, not palmitoylated. May be autophosphorylated on Thr-234 in vitro.

The protein resides in the cytoplasm. The protein localises to the cell membrane. The catalysed reaction is L-seryl-[protein] + ATP = O-phospho-L-seryl-[protein] + ADP + H(+). The enzyme catalyses L-threonyl-[protein] + ATP = O-phospho-L-threonyl-[protein] + ADP + H(+). Its activity is regulated as follows. Activated by calcium. Upon calcium binding to the EF-hand domains, the C-terminus of the junction domain (J domain) undergoes a conformational change which results in the dissociation of the pseudo-substrate inhibitory motif from the catalytic domain. This, in turn, may facilitate the autophosphorylation of the activation loop at Thr-234, which leads to the kinase activation. Intracellular calcium increase is triggered by xanthurenic acid (XA), a small mosquito molecule that induces the differentiation of specialized transmission stages, the gametocytes, into male and female gametes. Activated by a decrease in temperature (20 degrees Celsius) and an increase in pH (7.6) occurring when the parasite is ingested by in the mosquito. Calcium-dependent protein kinase which acts as a sensor and effector of intracellular Ca(2+) levels probably in part downstream of cGMP-activated PKG kinase. Plays a central role in the host erythrocytes and hepatocytes infection cycles, sexual reproduction and mosquito transmission of the parasite. During the liver stage, involved in sporozoite motility and thus in sporozoite invasion of host hepatocytes, probably together with CDPK1 and CDPK5. Involved in merosome egress from host hepatocytes, probably together with CDPK5. During the asexual blood stage, involved in merozoite invasion of host erythrocytes and motility by stabilizing the inner membrane complex, a structure below the plasma membrane which acts as an anchor for the glidosome, an acto-myosin motor. Required for cell cycle progression in the male gametocyte. During male gametogenesis in the mosquito gut, required to initiate the first round of DNA replication, probably by facilitating the assembly of the pre-replicative MCM complex, to assemble the first mitotic spindle and, at the end of gametogenesis, to initiate axoneme motility, cytokinesis and subsequent exflagellation. For each of these steps, may phosphorylate SOC1, SOC2 and SOC3, respectively. Together with CDPK1, regulates ookinete gliding in the mosquito host midgut. The chain is Calcium-dependent protein kinase 4 from Plasmodium falciparum (isolate 3D7).